Consider the following 220-residue polypeptide: MSKNELKKAAAMEAIQFVKNVNIVGVGTGSTVNYFIDALAEIKHQIEGAVASSVATENRLKEHRIPVVDLNSVSNVDVYVDGADEFNKHFYLTKGGGGALTREKIIAAAAKRFICIVDESKQVDVLGQFPLPIEVIPMARSFVAREIVKLKGDPVYRQGFTTDNGNVILDIHNLTILNPVELEAILNNIPGVIANGLFAQQPADDLLIGTPAGVQLHHRK.

Residues 28 to 31 (TGST), 81 to 84 (DGAD), and 94 to 97 (KGGG) each bind substrate. Glutamate 103 serves as the catalytic Proton acceptor. Lysine 121 provides a ligand contact to substrate.

Belongs to the ribose 5-phosphate isomerase family. As to quaternary structure, homodimer.

It catalyses the reaction aldehydo-D-ribose 5-phosphate = D-ribulose 5-phosphate. It participates in carbohydrate degradation; pentose phosphate pathway; D-ribose 5-phosphate from D-ribulose 5-phosphate (non-oxidative stage): step 1/1. In terms of biological role, catalyzes the reversible conversion of ribose-5-phosphate to ribulose 5-phosphate. The protein is Ribose-5-phosphate isomerase A of Coxiella burnetii (strain CbuK_Q154) (Coxiella burnetii (strain Q154)).